Reading from the N-terminus, the 199-residue chain is Pyridoxal 5'-phosphate synthase subunit PdxT (199 aa).

47 to 49 (GES) serves as a coordination point for L-glutamine. Residue C79 is the Nucleophile of the active site. L-glutamine-binding positions include R106 and 133 to 134 (IR). Residues H169 and E171 each act as charge relay system in the active site.

Belongs to the glutaminase PdxT/SNO family. As to quaternary structure, in the presence of PdxS, forms a dodecamer of heterodimers. Only shows activity in the heterodimer.

It carries out the reaction aldehydo-D-ribose 5-phosphate + D-glyceraldehyde 3-phosphate + L-glutamine = pyridoxal 5'-phosphate + L-glutamate + phosphate + 3 H2O + H(+). It catalyses the reaction L-glutamine + H2O = L-glutamate + NH4(+). The protein operates within cofactor biosynthesis; pyridoxal 5'-phosphate biosynthesis. Its function is as follows. Catalyzes the hydrolysis of glutamine to glutamate and ammonia as part of the biosynthesis of pyridoxal 5'-phosphate. The resulting ammonia molecule is channeled to the active site of PdxS. The protein is Pyridoxal 5'-phosphate synthase subunit PdxT of Desulfitobacterium hafniense (strain DSM 10664 / DCB-2).